We begin with the raw amino-acid sequence, 197 residues long: Thymidine kinase (197 aa).

ATP contacts are provided by residues 9–16 and 83–86; these read AAMNAGKS and DESQ. Glutamate 84 serves as the catalytic Proton acceptor. Residues cysteine 141, cysteine 143, cysteine 178, and cysteine 181 each coordinate Zn(2+).

This sequence belongs to the thymidine kinase family. Homotetramer.

The protein localises to the cytoplasm. The catalysed reaction is thymidine + ATP = dTMP + ADP + H(+). This is Thymidine kinase from Albidiferax ferrireducens (strain ATCC BAA-621 / DSM 15236 / T118) (Rhodoferax ferrireducens).